A 171-amino-acid chain; its full sequence is Bursicon (171 aa).

The N-terminal stretch at 1–31 is a signal peptide; that stretch reads MISSPSTPATFAAGSLVLLCLVLGGGHFALA. 5 disulfide bridges follow: Cys47-Cys96, Cys61-Cys110, Cys71-Cys131, Cys75-Cys133, and Cys93-Cys136. Residues 47-137 form the CTCK domain; it reads CQVTPVIHVL…PLECMCRPCT (91 aa).

In terms of assembly, heterodimer of burs and pburs.

Its subcellular location is the secreted. In terms of biological role, final heterodimeric neurohormone released at the end of the molting cycle, involved in the sclerotization (tanning) of the insect cuticle, melanization and wing spreading. The chain is Bursicon from Culex pipiens pipiens (Northern house mosquito).